A 288-amino-acid chain; its full sequence is ATP synthase gamma chain (288 aa).

It belongs to the ATPase gamma chain family. As to quaternary structure, F-type ATPases have 2 components, CF(1) - the catalytic core - and CF(0) - the membrane proton channel. CF(1) has five subunits: alpha(3), beta(3), gamma(1), delta(1), epsilon(1). CF(0) has three main subunits: a, b and c.

It localises to the cell inner membrane. Produces ATP from ADP in the presence of a proton gradient across the membrane. The gamma chain is believed to be important in regulating ATPase activity and the flow of protons through the CF(0) complex. The protein is ATP synthase gamma chain of Rickettsia prowazekii (strain Madrid E).